Here is a 612-residue protein sequence, read N- to C-terminus: GPI mannosyltransferase 3 (612 aa).

Transmembrane regions (helical) follow at residues 92–112 (LLAIASKEALSIICSIGAGLM) and 145–165 (VIYAPKLFMALLAATGEYFTI). The N-linked (GlcNAc...) asparagine glycan is linked to N188. Transmembrane regions (helical) follow at residues 192-212 (IALLLTLTNFFNCFFITRTFI), 254-274 (RPSNAIIWIVLGFFLTINLLL), and 288-308 (ILVVFTITMLVNVVIDFYFYN). A glycan (N-linked (GlcNAc...) asparagine) is linked at N321. Residues 339–359 (LLQSLPIMLGYSLPLFIYGLF) form a helical membrane-spanning segment. N-linked (GlcNAc...) asparagine glycosylation is present at N361. 3 helical membrane-spanning segments follow: residues 371 to 391 (FGALRQIKFVLILNIIFYSYL), 398 to 418 (FIYPLQPLFCLLSALGALKLA), and 429 to 449 (EYVWIIPLMSMIVSIFITTFQ). N-linked (GlcNAc...) asparagine glycans are attached at residues N508, N526, and N550.

The protein belongs to the glycosyltransferase 22 family. PIGB subfamily.

The protein localises to the endoplasmic reticulum membrane. It functions in the pathway glycolipid biosynthesis; glycosylphosphatidylinositol-anchor biosynthesis. Its function is as follows. Mannosyltransferase involved in glycosylphosphatidylinositol-anchor biosynthesis. Transfers the third mannose to Man2-GlcN-acyl-PI during GPI precursor assembly. In Candida glabrata (strain ATCC 2001 / BCRC 20586 / JCM 3761 / NBRC 0622 / NRRL Y-65 / CBS 138) (Yeast), this protein is GPI mannosyltransferase 3 (GPI10).